Consider the following 438-residue polypeptide: Mannan endo-1,4-beta-mannosidase F (438 aa).

A signal peptide spans 1 to 17 (MHPLPSVALLSAIGAVA). One can recognise a CBM1 domain in the interval 19–54 (QVGPWGQCGGRSYTGETSCVSGWSCVLFNEWYSQCQ). A ser-rich linker region spans residues 60-96 (STSSVSATAAPSSTSSSKESVPSATTSKKPVPTGSSS). A compositionally biased stretch (low complexity) spans 61-86 (TSSVSATAAPSSTSSSKESVPSATTS). The segment at 61–92 (TSSVSATAAPSSTSSSKESVPSATTSKKPVPT) is disordered. Residues 97–438 (FVKADGLKFN…CGVADHLSTL (342 aa)) are catalytic. Substrate-binding residues include W149 and N263. The Proton donor role is filled by E264. N277 carries an N-linked (GlcNAc...) asparagine glycan. Residue Y339 coordinates substrate. The Nucleophile role is filled by E373. Substrate is bound at residue W402.

It belongs to the glycosyl hydrolase 5 (cellulase A) family.

It is found in the secreted. The enzyme catalyses Random hydrolysis of (1-&gt;4)-beta-D-mannosidic linkages in mannans, galactomannans and glucomannans.. Functionally, endo-1,4-mannanase, a crucial enzyme for depolymerization of seed galactomannans and wood galactoglucomannans. This is Mannan endo-1,4-beta-mannosidase F (manF) from Aspergillus fumigatus (strain ATCC MYA-4609 / CBS 101355 / FGSC A1100 / Af293) (Neosartorya fumigata).